Consider the following 506-residue polypeptide: bZIP transcription factor TGA10 (506 aa).

Disordered regions lie at residues 22–50 (VSYM…HQHH) and 113–218 (PSSI…KTLR). 4 stretches are compositionally biased toward polar residues: residues 25–45 (MDSS…SFGG), 113–124 (PSSIQEQRQNSG), 142–152 (PSTTNKMNTGL), and 160–180 (SKRS…NDAP). A compositionally biased stretch (basic and acidic residues) spans 207 to 216 (DAPKTPDPKT). Residues 213–257 (DPKTLRRLAQNREAARKSRLRKKAYVQQLESSRIRLTQLEQELQR) form the bZIP domain. A basic motif region spans residues 215–235 (KTLRRLAQNREAARKSRLRKK). A Nuclear localization signal motif is present at residues 217 to 224 (LRRLAQNR). Residues 241-255 (LESSRIRLTQLEQEL) form a leucine-zipper region. In terms of domain architecture, DOG1 spans 288–502 (AAVFDMEYAR…RALSSLWHAR (215 aa)).

Belongs to the bZIP family. As to quaternary structure, binds DNA as a dimer. Interacts with TGA2.2. In terms of tissue distribution, specifically expressed in roots.

It is found in the nucleus. Functionally, transcription activator that binds to as1-like elements (5'-TGACGTAAgggaTGACGCA-3') in promoters of target genes. Regulates transcription in response to plant signaling molecules salicylic acid (SA), methyl jasmonate (MJ) and auxin (2,4D) only in leaves. Prevents lateral branching and may repress defense signaling. This is bZIP transcription factor TGA10 from Nicotiana tabacum (Common tobacco).